We begin with the raw amino-acid sequence, 491 residues long: Cobyric acid synthase (491 aa).

One can recognise a GATase cobBQ-type domain in the interval 246–435 (KIDVAVIKLP…IHGIFDGANF (190 aa)). Residue Cys-327 is the Nucleophile of the active site. Residue His-427 is part of the active site.

The protein belongs to the CobB/CobQ family. CobQ subfamily.

It functions in the pathway cofactor biosynthesis; adenosylcobalamin biosynthesis. Catalyzes amidations at positions B, D, E, and G on adenosylcobyrinic A,C-diamide. NH(2) groups are provided by glutamine, and one molecule of ATP is hydrogenolyzed for each amidation. The chain is Cobyric acid synthase from Clostridium acetobutylicum (strain ATCC 824 / DSM 792 / JCM 1419 / IAM 19013 / LMG 5710 / NBRC 13948 / NRRL B-527 / VKM B-1787 / 2291 / W).